The chain runs to 177 residues: R-phycoerythrin beta chain (177 aa).

The phycourobilin site is built by cysteine 50 and cysteine 61. Asparagine 72 carries the post-translational modification N4-methylasparagine. (2R,3E)-phycoerythrobilin contacts are provided by cysteine 82 and cysteine 158.

Belongs to the phycobiliprotein family. As to quaternary structure, heterodimer of an alpha and a beta chain. In terms of processing, contains two covalently linked phycoerythrobilin chromophores and one covalently linked phycourobilin chromophore.

The protein localises to the plastid. It localises to the chloroplast thylakoid membrane. Its function is as follows. Light-harvesting photosynthetic bile pigment-protein from the phycobiliprotein complex. This is R-phycoerythrin beta chain (cpeB) from Lophosiphonia boldii (Red alga).